An 878-amino-acid polypeptide reads, in one-letter code: Phosphoenolpyruvate carboxylase (878 aa).

Residues His-137 and Lys-545 contribute to the active site.

It belongs to the PEPCase type 1 family. Mg(2+) serves as cofactor.

The enzyme catalyses oxaloacetate + phosphate = phosphoenolpyruvate + hydrogencarbonate. Its function is as follows. Forms oxaloacetate, a four-carbon dicarboxylic acid source for the tricarboxylic acid cycle. The polypeptide is Phosphoenolpyruvate carboxylase (Photorhabdus laumondii subsp. laumondii (strain DSM 15139 / CIP 105565 / TT01) (Photorhabdus luminescens subsp. laumondii)).